A 146-amino-acid chain; its full sequence is uncharacterized protein (146 aa).

A signal peptide spans 1–26; it reads MQFRPSIALVLSIVGILSLEISWTDG.

Prismatic layer of shell (at protein level). Expressed primarily in the mantle with highest level in the mantle edge and lower level in the mantle pallium.

It is found in the secreted. This is an uncharacterized protein from Margaritifera margaritifera (Freshwater pearl mussel).